The chain runs to 580 residues: Negative elongation factor B (580 aa).

Position 519 is an N6-acetyllysine (Lys519). Positions 548-580 (LEQLDHRKPSPAQAAETPALELPLPSVPAPAPL) are disordered. Ser557 bears the Phosphoserine mark.

Belongs to the NELF-B family. The NELF complex is composed of NELFA, NELFB, NELFCD (isoform NELF-C or isoform NELF-D) and NELFE; the N-terminus of NELFB binds to the NELFA:NELFCD subcomplex. Binds RNA which may help to stabilize the NELF complex on nucleic acid. Interacts with the first BRCT repeat of BRCA1. Interacts with KIAA1191. Interacts with NELFE. Widely expressed. Expressed in heart, brain, lung, placenta, liver, skeletal muscle, kidney and pancreas.

The protein resides in the nucleus. Functionally, essential component of the NELF complex, a complex that negatively regulates the elongation of transcription by RNA polymerase II. The NELF complex, which acts via an association with the DSIF complex and causes transcriptional pausing, is counteracted by the P-TEFb kinase complex. May be able to induce chromatin unfolding. Essential for early embryogenesis; plays an important role in maintaining the undifferentiated state of embryonic stem cells (ESCs) by preventing unscheduled expression of developmental genes. Plays a key role in establishing the responsiveness of stem cells to developmental cues; facilitates plasticity and cell fate commitment in ESCs by establishing the appropriate expression level of signaling molecules. Supports the transcription of genes involved in energy metabolism in cardiomyocytes; facilitates the association of transcription initiation factors with the promoters of the metabolism-related genes. (Microbial infection) The NELF complex is involved in HIV-1 latency possibly involving recruitment of PCF11 to paused RNA polymerase II. In vitro, binds weakly to the HIV-1 TAR RNA which is located in the long terminal repeat (LTR) of HIV-1. This is Negative elongation factor B (NELFB) from Homo sapiens (Human).